The primary structure comprises 1490 residues: WD repeat-containing protein 7 (1490 aa).

WD repeat units follow at residues 17–56 (APTHCISAVLLTDDGATIVTGCHDGQICLWDLSVELQINP), 62–104 (GHTA…CIEF), 156–199 (ISPD…SDMQ), 324–366 (LICP…DKQG), 404–443 (NEPLKVTASVYIPAHGRLVCGREDGSIVIVPATQTAIVQL), 462–507 (GHRN…MKHI), and 558–597 (RHLFPIQVIKWRPSDDYLVVGCSDGSVYVWQMDTGALDRC). Disordered regions lie at residues 761 to 783 (DEEEDEEIMRQRREESDPEYRSS) and 911 to 945 (GDHMKKGPTRPPRPSTPDLSKARGSPPTSSNIVQG). Over residues 768–782 (IMRQRREESDPEYRS) the composition is skewed to basic and acidic residues. A Phosphoserine modification is found at serine 935. Positions 936-945 (PPTSSNIVQG) are enriched in polar residues. WD repeat units follow at residues 1351–1390 (PAICRFYMVSYYERNHRIAVGARHGSVALYDIRTGKCQTI) and 1392–1432 (GHKG…LGSI). Residue serine 1456 is modified to Phosphoserine.

The polypeptide is WD repeat-containing protein 7 (WDR7) (Homo sapiens (Human)).